The sequence spans 248 residues: Ubiquinone biosynthesis O-methyltransferase (248 aa).

Residues Arg41, Gly72, Asp93, and Met136 each contribute to the S-adenosyl-L-methionine site.

It belongs to the methyltransferase superfamily. UbiG/COQ3 family.

The catalysed reaction is a 3-demethylubiquinol + S-adenosyl-L-methionine = a ubiquinol + S-adenosyl-L-homocysteine + H(+). It catalyses the reaction a 3-(all-trans-polyprenyl)benzene-1,2-diol + S-adenosyl-L-methionine = a 2-methoxy-6-(all-trans-polyprenyl)phenol + S-adenosyl-L-homocysteine + H(+). It participates in cofactor biosynthesis; ubiquinone biosynthesis. Its function is as follows. O-methyltransferase that catalyzes the 2 O-methylation steps in the ubiquinone biosynthetic pathway. In Sinorhizobium medicae (strain WSM419) (Ensifer medicae), this protein is Ubiquinone biosynthesis O-methyltransferase.